The sequence spans 101 residues: Apolipoprotein C-II (101 aa).

An N-terminal signal peptide occupies residues 1 to 22; the sequence is MGIRYLLVLVLVLLVLGCEVQG. A lipid binding region spans residues 66 to 74; sequence TMDEKIREI. Residues 78–101 are lipoprotein lipase cofactor; the sequence is STAAVSTYAGIFTDQLLSMLKGDQ.

This sequence belongs to the apolipoprotein C2 family. Post-translationally, proapolipoprotein C-II is synthesized as a sialic acid containing glycoprotein which is subsequently desialylated prior to its proteolytic processing. Proapolipoprotein C-II, the major form found in plasma undergoes proteolytic cleavage of its N-terminal hexapeptide to generate apolipoprotein C-II, which occurs as the minor form in plasma.

The protein localises to the secreted. In terms of biological role, component of chylomicrons, very low-density lipoproteins (VLDL), low-density lipoproteins (LDL), and high-density lipoproteins (HDL) in plasma. Plays an important role in lipoprotein metabolism as an activator of lipoprotein lipase. Both proapolipoprotein C-II and apolipoprotein C-II can activate lipoprotein lipase. This Phoca vitulina (Harbor seal) protein is Apolipoprotein C-II (APOC2).